We begin with the raw amino-acid sequence, 366 residues long: Aminomethyltransferase (366 aa).

The protein belongs to the GcvT family. In terms of assembly, the glycine cleavage system is composed of four proteins: P, T, L and H.

It carries out the reaction N(6)-[(R)-S(8)-aminomethyldihydrolipoyl]-L-lysyl-[protein] + (6S)-5,6,7,8-tetrahydrofolate = N(6)-[(R)-dihydrolipoyl]-L-lysyl-[protein] + (6R)-5,10-methylene-5,6,7,8-tetrahydrofolate + NH4(+). Its function is as follows. The glycine cleavage system catalyzes the degradation of glycine. In Bacillus cytotoxicus (strain DSM 22905 / CIP 110041 / 391-98 / NVH 391-98), this protein is Aminomethyltransferase.